A 429-amino-acid polypeptide reads, in one-letter code: G2/mitotic-specific cyclin-B1 (429 aa).

The interval 71–114 is disordered; it reads TGKVSAKIPPPKPLEKVPPVSEPEVELAETHEPEPVMDEKLSPE. Lys73 carries the N6-acetyllysine modification. Residues 98-112 are compositionally biased toward basic and acidic residues; it reads AETHEPEPVMDEKLS. A Phosphoserine; by CDK1 modification is found at Ser122. Ser124 carries the phosphoserine modification. At Ser129 the chain carries Phosphoserine; by PLK1. Phosphoserine is present on Ser143. Interaction with CDK2 stretches follow at residues 165 to 173 and 254 to 257; these read EYVKDIYAY and YEEM. Thr317 is subject to Phosphothreonine.

This sequence belongs to the cyclin family. Cyclin AB subfamily. In terms of assembly, interacts with the CDC2 protein kinase to form a serine/threonine kinase holoenzyme complex also known as maturation promoting factor (MPF). The cyclin subunit imparts substrate specificity to the complex. Binds HEI10. Interacts with catalytically active RALBP1 and CDC2 during mitosis to form an endocytotic complex during interphase. Interacts with CCNF; interaction is required for nuclear localization. Interacts with CDK5RAP3. Interacts with RFPL4A and UBE2A. Interacts with INCA1. Ubiquitinated by the SCF(NIPA) complex during interphase, leading to its destruction. Not ubiquitinated during G2/M phases. In terms of processing, phosphorylated by PLK1 at Ser-129 on centrosomes during prophase: phosphorylation by PLK1 does not cause nuclear import. Phosphorylation at Ser-143 was also reported to be mediated by PLK1 but Ser-129 seems to be the primary phosphorylation site.

The protein resides in the cytoplasm. It localises to the nucleus. It is found in the cytoskeleton. Its subcellular location is the microtubule organizing center. The protein localises to the centrosome. Its function is as follows. Essential for the control of the cell cycle at the G2/M (mitosis) transition. The sequence is that of G2/mitotic-specific cyclin-B1 (CCNB1) from Mesocricetus auratus (Golden hamster).